A 146-amino-acid chain; its full sequence is Putative nickel-responsive regulator 1 (146 aa).

Residues His-81, His-92, Tyr-94, and Cys-100 each coordinate Ni(2+).

Belongs to the transcriptional regulatory CopG/NikR family. It depends on Ni(2+) as a cofactor.

Transcriptional regulator. This Methanosarcina mazei (strain ATCC BAA-159 / DSM 3647 / Goe1 / Go1 / JCM 11833 / OCM 88) (Methanosarcina frisia) protein is Putative nickel-responsive regulator 1.